The chain runs to 374 residues: Flap endonuclease 1 (374 aa).

Residues 1–105 form an N-domain region; that stretch reads MGVKGLNQLI…GELEKRMIRK (105 aa). A Mg(2+)-binding site is contributed by aspartate 34. The DNA site is built by arginine 47 and arginine 71. Residues aspartate 87, glutamate 159, glutamate 161, aspartate 180, and aspartate 182 each contribute to the Mg(2+) site. The tract at residues 123-254 is I-domain; that stretch reads EMVRYEKRSV…VTAFKLIKEH (132 aa). Glutamate 159 lines the DNA pocket. Residues glycine 232 and aspartate 234 each coordinate DNA. Aspartate 234 lines the Mg(2+) pocket. Residues 341–349 are interaction with PCNA; that stretch reads VQGRLDGFF. A compositionally biased stretch (basic and acidic residues) spans 354-365; the sequence is TEKRKPEQDKKT. Residues 354–374 are disordered; that stretch reads TEKRKPEQDKKTKGSKKAKKK.

Belongs to the XPG/RAD2 endonuclease family. FEN1 subfamily. Interacts with PCNA. Three molecules of FEN1 bind to one PCNA trimer with each molecule binding to one PCNA monomer. PCNA stimulates the nuclease activity without altering cleavage specificity. It depends on Mg(2+) as a cofactor. Post-translationally, phosphorylated. Phosphorylation upon DNA damage induces relocalization to the nuclear plasma.

The protein localises to the nucleus. Its subcellular location is the nucleolus. It localises to the nucleoplasm. It is found in the mitochondrion. Its function is as follows. Structure-specific nuclease with 5'-flap endonuclease and 5'-3' exonuclease activities involved in DNA replication and repair. During DNA replication, cleaves the 5'-overhanging flap structure that is generated by displacement synthesis when DNA polymerase encounters the 5'-end of a downstream Okazaki fragment. It enters the flap from the 5'-end and then tracks to cleave the flap base, leaving a nick for ligation. Also involved in the long patch base excision repair (LP-BER) pathway, by cleaving within the apurinic/apyrimidinic (AP) site-terminated flap. Acts as a genome stabilization factor that prevents flaps from equilibrating into structures that lead to duplications and deletions. Also possesses 5'-3' exonuclease activity on nicked or gapped double-stranded DNA, and exhibits RNase H activity. Also involved in replication and repair of rDNA and in repairing mitochondrial DNA. The chain is Flap endonuclease 1 from Meyerozyma guilliermondii (strain ATCC 6260 / CBS 566 / DSM 6381 / JCM 1539 / NBRC 10279 / NRRL Y-324) (Yeast).